Here is a 284-residue protein sequence, read N- to C-terminus: Deoxyribonuclease-1 (284 aa).

An N-terminal signal peptide occupies residues 1–22; it reads MRYTGLMGILLTLVNLLQLAAT. N40 carries N-linked (GlcNAc...) asparagine glycosylation. The active site involves E100. An intrachain disulfide couples C123 to C126. N-linked (GlcNAc...) asparagine glycosylation is present at N128. Residue H156 is part of the active site. A disulfide bond links C195 and C231.

The protein belongs to the DNase I family. Ca(2+) serves as cofactor. It depends on Mg(2+) as a cofactor.

Its subcellular location is the secreted. It localises to the zymogen granule. It is found in the nucleus envelope. The enzyme catalyses Endonucleolytic cleavage to 5'-phosphodinucleotide and 5'-phosphooligonucleotide end-products.. In terms of biological role, serum endocuclease secreted into body fluids by a wide variety of exocrine and endocrine organs. Expressed by non-hematopoietic tissues and preferentially cleaves protein-free DNA. Among other functions, seems to be involved in cell death by apoptosis. Binds specifically to G-actin and blocks actin polymerization. Together with DNASE1L3, plays a key role in degrading neutrophil extracellular traps (NETs). NETs are mainly composed of DNA fibers and are released by neutrophils to bind pathogens during inflammation. Degradation of intravascular NETs by DNASE1 and DNASE1L3 is required to prevent formation of clots that obstruct blood vessels and cause organ damage following inflammation. This chain is Deoxyribonuclease-1 (Dnase1), found in Rattus norvegicus (Rat).